A 553-amino-acid polypeptide reads, in one-letter code: ATP synthase F(1) complex subunit alpha, mitochondrial (553 aa).

The transit peptide at 1 to 43 (MLSVRVAAAVARALPRRAGLVSKNALGSSFIAARNLHASNSRL) directs the protein to the mitochondrion. Q44 bears the Pyrrolidone carboxylic acid mark. 2 positions are modified to phosphoserine: S53 and S65. Phosphoserine; alternate is present on S76. O-linked (GlcNAc) serine; alternate glycosylation occurs at S76. S106 is modified (phosphoserine). Residues K123, K126, and K132 each carry the N6-acetyllysine modification. T134 carries the post-translational modification Phosphothreonine. N6-acetyllysine; alternate is present on K161. Position 161 is an N6-succinyllysine; alternate (K161). S166 is subject to Phosphoserine. Residue K167 is modified to N6-acetyllysine; alternate. K167 bears the N6-succinyllysine; alternate mark. S184 bears the Phosphoserine mark. R204 is subject to Omega-N-methylarginine. ATP-binding residues include Q215, G217, K218, T219, and S220. T219 contacts Mg(2+). K230 and K239 each carry N6-acetyllysine; alternate. N6-succinyllysine; alternate occurs at positions 230 and 239. At K240 the chain carries N6-acetyllysine. N6-acetyllysine; alternate occurs at positions 261 and 305. An N6-succinyllysine; alternate mark is found at K261 and K305. D312 contributes to the Mg(2+) binding site. N6-acetyllysine; alternate is present on K427. N6-succinyllysine; alternate is present on K427. K434 bears the N6-acetyllysine mark. ATP is bound by residues Q473 and Q475. 4 positions are modified to N6-acetyllysine; alternate: K498, K506, K531, and K539. K498, K506, K531, and K539 each carry N6-succinyllysine; alternate. At K541 the chain carries N6-acetyllysine.

The protein belongs to the ATPase alpha/beta chains family. In terms of assembly, homotrimer. Component of the ATP synthase complex composed at least of ATP5F1A/subunit alpha, ATP5F1B/subunit beta, ATP5MC1/subunit c (homooctomer), MT-ATP6/subunit a, MT-ATP8/subunit 8, ATP5ME/subunit e, ATP5MF/subunit f, ATP5MG/subunit g, ATP5MK/subunit k, ATP5MJ/subunit j, ATP5F1C/subunit gamma, ATP5F1D/subunit delta, ATP5F1E/subunit epsilon, ATP5PF/subunit F6, ATP5PB/subunit b, ATP5PD/subunit d, ATP5PO/subunit OSCP. ATP synthase complex consists of a soluble F(1) head domain (subunits alpha(3) and beta(3)) - the catalytic core - and a membrane F(0) domain - the membrane proton channel (subunits c, a, 8, e, f, g, k and j). These two domains are linked by a central stalk (subunits gamma, delta, and epsilon) rotating inside the F1 region and a stationary peripheral stalk (subunits F6, b, d, and OSCP). Interacts with ATPAF2. Interacts with HRG; the interaction occurs on the surface of T-cells and alters the cell morphology when associated with concanavalin (in vitro). Interacts with PLG (angiostatin peptide); the interaction inhibits most of the angiogenic properties of angiostatin. Interacts with BLOC1S1. Interacts with BCL2L1 isoform BCL-X(L); the interaction mediates the association of BCL2L1 isoform BCL-X(L) with the mitochondrial membrane F(1)F(0) ATP synthase and enhances neurons metabolic efficiency. Interacts with CLN5 and PPT1. Interacts with S100A1; this interaction increases F1-ATPase activity. Interacts with ABCB7; this interaction allows the regulation of cellular iron homeostasis and cellular reactive oxygen species (ROS) levels in cardiomyocytes. Acetylated on lysine residues. BLOC1S1 is required for acetylation. In terms of tissue distribution, heart muscle (at protein level). Heart and liver.

It is found in the mitochondrion inner membrane. Its subcellular location is the cell membrane. Functionally, subunit alpha, of the mitochondrial membrane ATP synthase complex (F(1)F(0) ATP synthase or Complex V) that produces ATP from ADP in the presence of a proton gradient across the membrane which is generated by electron transport complexes of the respiratory chain. ATP synthase complex consist of a soluble F(1) head domain - the catalytic core - and a membrane F(1) domain - the membrane proton channel. These two domains are linked by a central stalk rotating inside the F(1) region and a stationary peripheral stalk. During catalysis, ATP synthesis in the catalytic domain of F(1) is coupled via a rotary mechanism of the central stalk subunits to proton translocation. In vivo, can only synthesize ATP although its ATP hydrolase activity can be activated artificially in vitro. With the catalytic subunit beta (ATP5F1B), forms the catalytic core in the F(1) domain. Subunit alpha does not bear the catalytic high-affinity ATP-binding sites. The polypeptide is ATP synthase F(1) complex subunit alpha, mitochondrial (Bos taurus (Bovine)).